A 380-amino-acid chain; its full sequence is Chorismate synthase (380 aa).

Residues R48 and R53 each contribute to the NADP(+) site. Residues 126–128 (RAS), G284, 299–303 (KPTSS), and R326 contribute to the FMN site.

This sequence belongs to the chorismate synthase family. It depends on FMNH2 as a cofactor.

It catalyses the reaction 5-O-(1-carboxyvinyl)-3-phosphoshikimate = chorismate + phosphate. The protein operates within metabolic intermediate biosynthesis; chorismate biosynthesis; chorismate from D-erythrose 4-phosphate and phosphoenolpyruvate: step 7/7. Catalyzes the anti-1,4-elimination of the C-3 phosphate and the C-6 proR hydrogen from 5-enolpyruvylshikimate-3-phosphate (EPSP) to yield chorismate, which is the branch point compound that serves as the starting substrate for the three terminal pathways of aromatic amino acid biosynthesis. This reaction introduces a second double bond into the aromatic ring system. This Ignicoccus hospitalis (strain KIN4/I / DSM 18386 / JCM 14125) protein is Chorismate synthase.